Here is a 509-residue protein sequence, read N- to C-terminus: ATP synthase subunit alpha (509 aa).

Position 169-176 (169-176 (GDRQTGKT)) interacts with ATP.

It belongs to the ATPase alpha/beta chains family. As to quaternary structure, F-type ATPases have 2 components, CF(1) - the catalytic core - and CF(0) - the membrane proton channel. CF(1) has five subunits: alpha(3), beta(3), gamma(1), delta(1), epsilon(1). CF(0) has three main subunits: a(1), b(2) and c(9-12). The alpha and beta chains form an alternating ring which encloses part of the gamma chain. CF(1) is attached to CF(0) by a central stalk formed by the gamma and epsilon chains, while a peripheral stalk is formed by the delta and b chains.

It is found in the cell inner membrane. It carries out the reaction ATP + H2O + 4 H(+)(in) = ADP + phosphate + 5 H(+)(out). In terms of biological role, produces ATP from ADP in the presence of a proton gradient across the membrane. The alpha chain is a regulatory subunit. This chain is ATP synthase subunit alpha, found in Methylobacterium nodulans (strain LMG 21967 / CNCM I-2342 / ORS 2060).